Consider the following 611-residue polypeptide: RAC serine/threonine-protein kinase (611 aa).

Residues 14–25 show a composition bias toward low complexity; sequence VVASAPAPGSAS. 2 disordered regions span residues 14 to 33 and 45 to 88; these read VVAS…SPTT and QSTH…NTTF. Ser30 carries the post-translational modification Phosphoserine. A PH domain is found at 106–211; sequence QVVKEGWLMK…WTEAIRNVSS (106 aa). Residues 266-523 enclose the Protein kinase domain; the sequence is FEFLKVLGKG…VKEIQAHPFF (258 aa). ATP is bound by residues 272 to 280 and Lys295; that span reads LGKGTFGKV. The Proton acceptor role is filled by Asp389. An AGC-kinase C-terminal domain is found at 524–597; sequence ASINWTDLVL…QGDMASTLGT (74 aa). Ser586 is modified (phosphoserine).

It belongs to the protein kinase superfamily. AGC Ser/Thr protein kinase family. RAC subfamily. As to quaternary structure, interacts with trbl. In terms of processing, phosphorylated and activated by Pk61C/PDK1. Phosphorylated on Ser-586 by the TORC2 complex. Ubiquitously expressed. Present in ovary, where it is concentrated at the basal side of follicle cells.

The protein localises to the cytoplasm. It localises to the cytosol. The protein resides in the cell membrane. It catalyses the reaction L-seryl-[protein] + ATP = O-phospho-L-seryl-[protein] + ADP + H(+). The catalysed reaction is L-threonyl-[protein] + ATP = O-phospho-L-threonyl-[protein] + ADP + H(+). Its function is as follows. Serine/threonine kinase involved in various developmental processes. During early embryogenesis, acts as a survival protein. During mid-embryogenesis, phosphorylates and activates trh, a transcription factor required for tracheal cell fate determination. Also regulates tracheal cell migration. Later in development, acts downstream of PI3K and Pk61C/PDK1 in the insulin receptor transduction pathway which regulates cell growth and organ size, by phosphorylating and antagonizing FOXO transcription factor. Controls follicle cell size during oogenesis. May also stimulate cell growth by phosphorylating Gig/Tsc2 and inactivating the Tsc complex. Dephosphorylation of 'Ser-586' by Phlpp triggers apoptosis and suppression of tumor growth. The polypeptide is RAC serine/threonine-protein kinase (Drosophila melanogaster (Fruit fly)).